Reading from the N-terminus, the 306-residue chain is Acetyl-coenzyme A carboxylase carboxyl transferase subunit beta (306 aa).

Residues 27–296 (LWHKCPSCDA…PRFVAPVIEP (270 aa)) enclose the CoA carboxyltransferase N-terminal domain. Cys-31, Cys-34, Cys-50, and Cys-53 together coordinate Zn(2+). The C4-type zinc-finger motif lies at 31–53 (CPSCDAVLYRPELEKTLDVCPKC).

Belongs to the AccD/PCCB family. In terms of assembly, acetyl-CoA carboxylase is a heterohexamer composed of biotin carboxyl carrier protein (AccB), biotin carboxylase (AccC) and two subunits each of ACCase subunit alpha (AccA) and ACCase subunit beta (AccD). The cofactor is Zn(2+).

It localises to the cytoplasm. The catalysed reaction is N(6)-carboxybiotinyl-L-lysyl-[protein] + acetyl-CoA = N(6)-biotinyl-L-lysyl-[protein] + malonyl-CoA. Its pathway is lipid metabolism; malonyl-CoA biosynthesis; malonyl-CoA from acetyl-CoA: step 1/1. In terms of biological role, component of the acetyl coenzyme A carboxylase (ACC) complex. Biotin carboxylase (BC) catalyzes the carboxylation of biotin on its carrier protein (BCCP) and then the CO(2) group is transferred by the transcarboxylase to acetyl-CoA to form malonyl-CoA. This chain is Acetyl-coenzyme A carboxylase carboxyl transferase subunit beta, found in Pseudomonas syringae pv. tomato (strain ATCC BAA-871 / DC3000).